The chain runs to 189 residues: Potassium-transporting ATPase KdpC subunit (189 aa).

Residues 8-28 (LVMLILLTLITGIAYPLLTTG) traverse the membrane as a helical segment.

Belongs to the KdpC family. The system is composed of three essential subunits: KdpA, KdpB and KdpC.

Its subcellular location is the cell inner membrane. Its function is as follows. Part of the high-affinity ATP-driven potassium transport (or Kdp) system, which catalyzes the hydrolysis of ATP coupled with the electrogenic transport of potassium into the cytoplasm. This subunit acts as a catalytic chaperone that increases the ATP-binding affinity of the ATP-hydrolyzing subunit KdpB by the formation of a transient KdpB/KdpC/ATP ternary complex. The protein is Potassium-transporting ATPase KdpC subunit of Serratia proteamaculans (strain 568).